The sequence spans 326 residues: Tagatose 1,6-diphosphate aldolase (326 aa).

This sequence belongs to the aldolase LacD family.

The enzyme catalyses D-tagatofuranose 1,6-bisphosphate = D-glyceraldehyde 3-phosphate + dihydroxyacetone phosphate. It functions in the pathway carbohydrate metabolism; D-tagatose 6-phosphate degradation; D-glyceraldehyde 3-phosphate and glycerone phosphate from D-tagatose 6-phosphate: step 2/2. This is Tagatose 1,6-diphosphate aldolase from Staphylococcus aureus (strain Mu3 / ATCC 700698).